We begin with the raw amino-acid sequence, 288 residues long: HTH-type transcriptional regulator YofA (288 aa).

The HTH lysR-type domain maps to 1–58 (MESGDLKIFQAVARKGSISKAAESLHYVQSNVTNRIQQLERQLQTQLFYRTNRGMTLT). Residues 18–37 (ISKAAESLHYVQSNVTNRIQ) constitute a DNA-binding region (H-T-H motif).

Belongs to the LysR transcriptional regulatory family.

Its subcellular location is the cytoplasm. Functionally, regulates expression of the cell division protein ftsW, and is essential for cell viability during stationary phase. The polypeptide is HTH-type transcriptional regulator YofA (yofA) (Bacillus velezensis (strain DSM 23117 / BGSC 10A6 / LMG 26770 / FZB42) (Bacillus amyloliquefaciens subsp. plantarum)).